The primary structure comprises 348 residues: N6-Methyl-AMP deaminase (348 aa).

Residues H18 and H20 each coordinate Zn(2+). N(6)-methyl-AMP is bound by residues H20, N22, H68, 100-103 (STPR), D142, and G175. H202 lines the Zn(2+) pocket. The N(6)-methyl-AMP site is built by E205, D287, and D288. Residue E205 is the Proton donor of the active site. Position 287 (D287) interacts with Zn(2+).

Belongs to the metallo-dependent hydrolases superfamily. Adenosine and AMP deaminases family. Monomer. The cofactor is Zn(2+).

It catalyses the reaction N(6)-methyl-AMP + H2O + H(+) = IMP + methylamine. Functionally, catalyzes the hydrolysis of the free cytosolic methylated adenosine nucleotide N(6)-methyl-AMP (N6-mAMP) to produce inositol monophosphate (IMP) and methylamine. Is required for the catabolism of cytosolic N6-mAMP, which is derived from the degradation of mRNA containing N6-methylated adenine (m6A). This Danio rerio (Zebrafish) protein is N6-Methyl-AMP deaminase (mapda).